The following is a 344-amino-acid chain: L-rhamnose-proton symporter (344 aa).

10 consecutive transmembrane segments (helical) span residues 4-24, 38-58, 68-88, 101-121, 137-157, 175-195, 214-234, 259-279, 290-310, and 323-343; these read AITM…CFYA, WSVG…ALLL, FSLS…IGNI, MGIG…TPII, TLLG…AGQL, LVLA…MNAA, LPSY…FCFI, VLLS…YAWG, ISWM…GLVL, and VLSL…IGMA.

It belongs to the L-rhamnose transporter (TC 2.A.7.6) family.

The protein resides in the cell inner membrane. The enzyme catalyses L-rhamnopyranose(in) + H(+)(in) = L-rhamnopyranose(out) + H(+)(out). Its function is as follows. Uptake of L-rhamnose across the cytoplasmic membrane with the concomitant transport of protons into the cell (symport system). In Shigella boydii serotype 18 (strain CDC 3083-94 / BS512), this protein is L-rhamnose-proton symporter.